We begin with the raw amino-acid sequence, 144 residues long: Small ribosomal subunit protein bS6 (144 aa).

Positions 95–144 (ELEEGPSAMMQSKSRDDRPRRGEGDDRPRRDDREDRPRRDREPRRMEGGE) are disordered. Residues 107–144 (KSRDDRPRRGEGDDRPRRDDREDRPRRDREPRRMEGGE) show a composition bias toward basic and acidic residues.

Belongs to the bacterial ribosomal protein bS6 family.

Functionally, binds together with bS18 to 16S ribosomal RNA. In Paramagnetospirillum magneticum (strain ATCC 700264 / AMB-1) (Magnetospirillum magneticum), this protein is Small ribosomal subunit protein bS6.